The following is a 98-amino-acid chain: Lactococcin-A immunity protein (98 aa).

Its function is as follows. Imparts immunity to lactococcin-A to naturally sensitive host strains. The polypeptide is Lactococcin-A immunity protein (lciA) (Lactococcus lactis subsp. cremoris (Streptococcus cremoris)).